The sequence spans 225 residues: Testis-expressed protein 30 (225 aa).

The protein is Testis-expressed protein 30 (Tex30) of Mus musculus (Mouse).